We begin with the raw amino-acid sequence, 174 residues long: Protein FanG (174 aa).

A signal peptide spans Met1–Ala21. Cysteines 41 and 75 form a disulfide.

The protein localises to the fimbrium. Functionally, involved in the biosynthesis of K99 fimbriae. The sequence is that of Protein FanG (fanG) from Escherichia coli.